The following is a 208-amino-acid chain: Uracil phosphoribosyltransferase (208 aa).

Residues arginine 78, arginine 103, and aspartate 130–serine 138 each bind 5-phospho-alpha-D-ribose 1-diphosphate. Uracil contacts are provided by residues isoleucine 193 and glycine 198–alanine 200. A 5-phospho-alpha-D-ribose 1-diphosphate-binding site is contributed by aspartate 199.

The protein belongs to the UPRTase family. The cofactor is Mg(2+).

It carries out the reaction UMP + diphosphate = 5-phospho-alpha-D-ribose 1-diphosphate + uracil. The protein operates within pyrimidine metabolism; UMP biosynthesis via salvage pathway; UMP from uracil: step 1/1. Allosterically activated by GTP. Catalyzes the conversion of uracil and 5-phospho-alpha-D-ribose 1-diphosphate (PRPP) to UMP and diphosphate. The protein is Uracil phosphoribosyltransferase of Vibrio parahaemolyticus serotype O3:K6 (strain RIMD 2210633).